The primary structure comprises 415 residues: tRNA(Ile2) 2-agmatinylcytidine synthetase TiaS (415 aa).

It belongs to the TiaS family.

It localises to the cytoplasm. The enzyme catalyses cytidine(34) in tRNA(Ile2) + agmatine + ATP + H2O = 2-agmatinylcytidine(34) in tRNA(Ile2) + AMP + 2 phosphate + 2 H(+). Its function is as follows. ATP-dependent agmatine transferase that catalyzes the formation of 2-agmatinylcytidine (agm2C) at the wobble position (C34) of tRNA(Ile2), converting the codon specificity from AUG to AUA. The protein is tRNA(Ile2) 2-agmatinylcytidine synthetase TiaS of Methanocorpusculum labreanum (strain ATCC 43576 / DSM 4855 / Z).